Reading from the N-terminus, the 198-residue chain is Large ribosomal subunit protein bL25 (198 aa).

The protein belongs to the bacterial ribosomal protein bL25 family. CTC subfamily. In terms of assembly, part of the 50S ribosomal subunit; part of the 5S rRNA/L5/L18/L25 subcomplex. Contacts the 5S rRNA. Binds to the 5S rRNA independently of L5 and L18.

This is one of the proteins that binds to the 5S RNA in the ribosome where it forms part of the central protuberance. This is Large ribosomal subunit protein bL25 from Streptomyces coelicolor (strain ATCC BAA-471 / A3(2) / M145).